A 344-amino-acid polypeptide reads, in one-letter code: 5-formaminoimidazole-4-carboxamide-1-(beta)-D-ribofuranosyl 5'-monophosphate synthetase (344 aa).

The 5-amino-1-(5-phospho-beta-D-ribosyl)imidazole-4-carboxamide site is built by H31 and S96. The ATP-grasp domain occupies 130-324 (MELLQRAGVP…YFDRPMDMGE (195 aa)). ATP is bound by residues 153–198 (PVIV…VPAY) and E220. N240 provides a ligand contact to 5-amino-1-(5-phospho-beta-D-ribosyl)imidazole-4-carboxamide. Mg(2+) is bound by residues E279 and E292.

It belongs to the phosphohexose mutase family. Mg(2+) serves as cofactor. Requires Mn(2+) as cofactor.

It catalyses the reaction 5-amino-1-(5-phospho-beta-D-ribosyl)imidazole-4-carboxamide + formate + ATP = 5-formamido-1-(5-phospho-D-ribosyl)imidazole-4-carboxamide + ADP + phosphate. Its pathway is purine metabolism; IMP biosynthesis via de novo pathway; 5-formamido-1-(5-phospho-D-ribosyl)imidazole-4-carboxamide from 5-amino-1-(5-phospho-D-ribosyl)imidazole-4-carboxamide (formate route): step 1/1. Catalyzes the ATP- and formate-dependent formylation of 5-aminoimidazole-4-carboxamide-1-beta-d-ribofuranosyl 5'-monophosphate (AICAR) to 5-formaminoimidazole-4-carboxamide-1-beta-d-ribofuranosyl 5'-monophosphate (FAICAR) in the absence of folates. The sequence is that of 5-formaminoimidazole-4-carboxamide-1-(beta)-D-ribofuranosyl 5'-monophosphate synthetase from Pyrobaculum neutrophilum (strain DSM 2338 / JCM 9278 / NBRC 100436 / V24Sta) (Thermoproteus neutrophilus).